Reading from the N-terminus, the 247-residue chain is UPF0309 protein GWCH70_1414 (247 aa).

One can recognise an SIS domain in the interval 31–214 (VSEAIQKGGI…VLMAENGFEP (184 aa)).

This sequence belongs to the UPF0309 family.

The sequence is that of UPF0309 protein GWCH70_1414 from Geobacillus sp. (strain WCH70).